Consider the following 168-residue polypeptide: Replicase polyprotein 1ab (168 aa).

The Nidovirus-type SAM-dependent 2'-O-MTase domain maps to 1–165 (PNTKSIDGEN…KLLNFGNHLV (165 aa)).

In terms of biological role, the replicase polyprotein of coronaviruses is a multifunctional protein: it contains the activities necessary for the transcription of negative stranded RNA, leader RNA, subgenomic mRNAs and progeny virion RNA as well as proteinases responsible for the cleavage of the polyprotein into functional products. The sequence is that of Replicase polyprotein 1ab (rep) from Canine coronavirus (strain Insavc-1) (CCoV).